We begin with the raw amino-acid sequence, 129 residues long: Small ribosomal subunit protein uS11 (129 aa).

The protein belongs to the universal ribosomal protein uS11 family. As to quaternary structure, part of the 30S ribosomal subunit. Interacts with proteins S7 and S18. Binds to IF-3.

In terms of biological role, located on the platform of the 30S subunit, it bridges several disparate RNA helices of the 16S rRNA. Forms part of the Shine-Dalgarno cleft in the 70S ribosome. The protein is Small ribosomal subunit protein uS11 of Mannheimia succiniciproducens (strain KCTC 0769BP / MBEL55E).